The chain runs to 355 residues: Homeobox protein knotted-1-like LET6 (355 aa).

Positions 75–96 (PFMDNNNNNNPQEDNNSSSSSI) are disordered. Residues 79 to 96 (NNNNNNPQEDNNSSSSSI) are compositionally biased toward low complexity. The 21-residue stretch at 237–257 (ELKGQLLRKYSGYLGSLKQEF) folds into the ELK domain. The homeobox; TALE-type DNA-binding region spans 258–321 (MKKRKKGKLP…NQRKRHWKPS (64 aa)).

Belongs to the TALE/KNOX homeobox family. Expressed in developing lateral organs and developing ovaries in flowers.

The protein localises to the nucleus. May have a role to play in formative events in ovule and embryo morphogenesis. Probably binds to the DNA sequence 5'-TGAC-3'. The protein is Homeobox protein knotted-1-like LET6 (LET6) of Solanum lycopersicum (Tomato).